A 1415-amino-acid polypeptide reads, in one-letter code: DNA-directed RNA polymerase subunit beta' (1415 aa).

4 residues coordinate Zn(2+): Cys72, Cys74, Cys87, and Cys90. Residues Asp463, Asp465, and Asp467 each coordinate Mg(2+). Zn(2+) contacts are provided by Cys811, Cys885, Cys892, and Cys895.

Belongs to the RNA polymerase beta' chain family. As to quaternary structure, the RNAP catalytic core consists of 2 alpha, 1 beta, 1 beta' and 1 omega subunit. When a sigma factor is associated with the core the holoenzyme is formed, which can initiate transcription. It depends on Mg(2+) as a cofactor. Zn(2+) is required as a cofactor.

It carries out the reaction RNA(n) + a ribonucleoside 5'-triphosphate = RNA(n+1) + diphosphate. Functionally, DNA-dependent RNA polymerase catalyzes the transcription of DNA into RNA using the four ribonucleoside triphosphates as substrates. The polypeptide is DNA-directed RNA polymerase subunit beta' (Cereibacter sphaeroides (strain ATCC 17023 / DSM 158 / JCM 6121 / CCUG 31486 / LMG 2827 / NBRC 12203 / NCIMB 8253 / ATH 2.4.1.) (Rhodobacter sphaeroides)).